We begin with the raw amino-acid sequence, 1073 residues long: Guanylyl cyclase C (1073 aa).

The signal sequence occupies residues 1–23 (MKTLLLDLALWSLLFQPGWLSFS). The Extracellular segment spans residues 24–430 (SQVSQNCHNG…PNDITGRGPQ (407 aa)). N-linked (GlcNAc...) asparagine glycans are attached at residues N32, N75, N79, N195, N284, N307, N345, and N402. Residues 431–454 (ILMIAVFTLTGAVVLLLLVALLML) form a helical membrane-spanning segment. The Cytoplasmic segment spans residues 455-1073 (RKYRKDYELR…NTTDKESTYF (619 aa)). A Protein kinase domain is found at 489–749 (LKIDDDKRRD…KIETTLAKIF (261 aa)). Residues 824-954 (TIYFSDIVGF…DTVNTASRME (131 aa)) form the Guanylate cyclase domain.

This sequence belongs to the adenylyl cyclase class-4/guanylyl cyclase family. Homotrimer. Interacts via its C-terminal region with NHERF4. Interacts with the lectin chaperone VIP36. Post-translationally, glycosylation at Asn-75 and/or Asn-79 is required for interaction with VIP36 while glycosylation at Asn-345 and Asn-402 modulates ligand-mediated GUCY2C activation.

The protein resides in the cell membrane. The protein localises to the endoplasmic reticulum membrane. It carries out the reaction GTP = 3',5'-cyclic GMP + diphosphate. Functionally, guanylyl cyclase that catalyzes synthesis of cyclic GMP (cGMP) from GTP. Receptor for the E.coli heat-stable enterotoxin; E.coli enterotoxin markedly stimulates the accumulation of cGMP in mammalian cells expressing GUCY2C. Also activated by the endogenous peptides guanylin and uroguanylin. This is Guanylyl cyclase C from Homo sapiens (Human).